A 93-amino-acid polypeptide reads, in one-letter code: Putative pterin-4-alpha-carbinolamine dehydratase (93 aa).

It belongs to the pterin-4-alpha-carbinolamine dehydratase family.

The enzyme catalyses (4aS,6R)-4a-hydroxy-L-erythro-5,6,7,8-tetrahydrobiopterin = (6R)-L-erythro-6,7-dihydrobiopterin + H2O. The sequence is that of Putative pterin-4-alpha-carbinolamine dehydratase from Trichormus variabilis (strain ATCC 29413 / PCC 7937) (Anabaena variabilis).